A 252-amino-acid polypeptide reads, in one-letter code: MILASLLTFATAALAFDCSDKELERYNFESIKGVHSYTTLKNTPPSQTNVTWNVGICQPISAIKDCPANSDICGVTSILRKDEKPVVSEVVSFKSDLQKAYESSDNGIKVIYKGANWGDVLVNAELNFQCDKDSQNNEFTLDQWDGTNLKLSMKTKAACITSKEDKKKEKHDNGESWGWFTWIFIFLVLFLSIYIIGGAWFQYNKGNAIDFQSALKEVVENFIELLKGLPSFGKEIIEKFTGRSNRGEYSAV.

Positions 1–15 (MILASLLTFATAALA) are cleaved as a signal peptide. The MRH domain occupies 16 to 161 (FDCSDKELER…SMKTKAACIT (146 aa)). At 16-176 (FDCSDKELER…KKEKHDNGES (161 aa)) the chain is on the lumenal side. Intrachain disulfides connect Cys18-Cys57, Cys66-Cys73, and Cys130-Cys159. Residue Asn49 is glycosylated (N-linked (GlcNAc...) asparagine). The chain crosses the membrane as a helical span at residues 177 to 197 (WGWFTWIFIFLVLFLSIYIIG). Residues 198–252 (GAWFQYNKGNAIDFQSALKEVVENFIELLKGLPSFGKEIIEKFTGRSNRGEYSAV) are Cytoplasmic-facing.

This sequence belongs to the ATG27 family.

The protein resides in the cytoplasmic vesicle membrane. The protein localises to the golgi apparatus membrane. It is found in the mitochondrion membrane. It localises to the preautophagosomal structure membrane. Its function is as follows. Plays a key role in autophagy. Effector of VPS34 phosphatidylinositol 3-phosphate kinase signaling. Regulates the cytoplasm to vacuole transport (Cvt) vesicle formation. Plays a role in ATG protein retrieval from the pre-autophagosomal structure (PAS) and is especially required for autophagy-dependent cycling of ATG9. Finally, plays an important role in biofilm formation and resistance to antifungal compounds such as fluconazole, itraconazole, terbinafine and caspofungin. This is Autophagy-related protein 27 from Candida albicans (strain SC5314 / ATCC MYA-2876) (Yeast).